The primary structure comprises 211 residues: MYQPDFPTVPFRLGLYPVVDSVAWIERLLEAGVRTIQLRIKDKRDEEVEADVIAAIALGRRYNARLFINDYWRLAIKHRAYGVHLGQEDLETTDLKAIQAAGLRLGVSTHDDMEIDVALAAKPSYIALGHVFPTQTKQMPSAPQGLAQLASHIERLADYPTVAIGGISLERATAVLATGVGSIAVVSAITQAADWRAATAQLLDIAGVGDE.

4-amino-2-methyl-5-(diphosphooxymethyl)pyrimidine-binding positions include 37–41 (QLRIK) and N69. D70 and D89 together coordinate Mg(2+). S108 serves as a coordination point for 4-amino-2-methyl-5-(diphosphooxymethyl)pyrimidine. Residue 134-136 (TQT) participates in 2-[(2R,5Z)-2-carboxy-4-methylthiazol-5(2H)-ylidene]ethyl phosphate binding. A 4-amino-2-methyl-5-(diphosphooxymethyl)pyrimidine-binding site is contributed by K137. 2-[(2R,5Z)-2-carboxy-4-methylthiazol-5(2H)-ylidene]ethyl phosphate is bound by residues G166 and 186 to 187 (VS).

Belongs to the thiamine-phosphate synthase family. The cofactor is Mg(2+).

The enzyme catalyses 2-[(2R,5Z)-2-carboxy-4-methylthiazol-5(2H)-ylidene]ethyl phosphate + 4-amino-2-methyl-5-(diphosphooxymethyl)pyrimidine + 2 H(+) = thiamine phosphate + CO2 + diphosphate. It catalyses the reaction 2-(2-carboxy-4-methylthiazol-5-yl)ethyl phosphate + 4-amino-2-methyl-5-(diphosphooxymethyl)pyrimidine + 2 H(+) = thiamine phosphate + CO2 + diphosphate. It carries out the reaction 4-methyl-5-(2-phosphooxyethyl)-thiazole + 4-amino-2-methyl-5-(diphosphooxymethyl)pyrimidine + H(+) = thiamine phosphate + diphosphate. Its pathway is cofactor biosynthesis; thiamine diphosphate biosynthesis; thiamine phosphate from 4-amino-2-methyl-5-diphosphomethylpyrimidine and 4-methyl-5-(2-phosphoethyl)-thiazole: step 1/1. In terms of biological role, condenses 4-methyl-5-(beta-hydroxyethyl)thiazole monophosphate (THZ-P) and 2-methyl-4-amino-5-hydroxymethyl pyrimidine pyrophosphate (HMP-PP) to form thiamine monophosphate (TMP). In Salmonella dublin (strain CT_02021853), this protein is Thiamine-phosphate synthase.